A 601-amino-acid chain; its full sequence is Potassium-transporting ATPase potassium-binding subunit (601 aa).

12 helical membrane-spanning segments follow: residues 6–26, 65–85, 136–156, 179–199, 283–303, 313–333, 367–387, 397–417, 419–439, 458–478, 524–544, and 566–586; these read IMLL…LGLF, SYAI…YAVQ, ALTG…FALI, LYIL…QGVI, FSNF…CFTF, GWAV…IVMT, FGIS…CGAV, MGGF…GGVG, GLYG…LMIG, SIAI…AVLV, MLAI…LAIA, and LFVA…YVPA.

Belongs to the KdpA family. As to quaternary structure, the system is composed of three essential subunits: KdpA, KdpB and KdpC.

It localises to the cell inner membrane. In terms of biological role, part of the high-affinity ATP-driven potassium transport (or Kdp) system, which catalyzes the hydrolysis of ATP coupled with the electrogenic transport of potassium into the cytoplasm. This subunit binds the periplasmic potassium ions and delivers the ions to the membrane domain of KdpB through an intramembrane tunnel. In Herminiimonas arsenicoxydans, this protein is Potassium-transporting ATPase potassium-binding subunit.